A 304-amino-acid polypeptide reads, in one-letter code: UDP-3-O-acyl-N-acetylglucosamine deacetylase (304 aa).

3 residues coordinate Zn(2+): histidine 78, histidine 237, and aspartate 241. Histidine 264 serves as the catalytic Proton donor.

This sequence belongs to the LpxC family. Zn(2+) serves as cofactor.

It carries out the reaction a UDP-3-O-[(3R)-3-hydroxyacyl]-N-acetyl-alpha-D-glucosamine + H2O = a UDP-3-O-[(3R)-3-hydroxyacyl]-alpha-D-glucosamine + acetate. It participates in glycolipid biosynthesis; lipid IV(A) biosynthesis; lipid IV(A) from (3R)-3-hydroxytetradecanoyl-[acyl-carrier-protein] and UDP-N-acetyl-alpha-D-glucosamine: step 2/6. Functionally, catalyzes the hydrolysis of UDP-3-O-myristoyl-N-acetylglucosamine to form UDP-3-O-myristoylglucosamine and acetate, the committed step in lipid A biosynthesis. The polypeptide is UDP-3-O-acyl-N-acetylglucosamine deacetylase (Xylella fastidiosa (strain Temecula1 / ATCC 700964)).